A 128-amino-acid polypeptide reads, in one-letter code: uncharacterized protein (128 aa).

The next 3 helical transmembrane spans lie at 30–50 (ILFT…LGSS), 65–85 (VFRG…LGIQ), and 93–113 (WEVA…PDIV).

Its subcellular location is the cell membrane. This is an uncharacterized protein from Rickettsia prowazekii (strain Madrid E).